Here is a 506-residue protein sequence, read N- to C-terminus: 2-isopropylmalate synthase (506 aa).

In terms of domain architecture, Pyruvate carboxyltransferase spans 8-272; the sequence is LIVFDTTLRD…ETGIQLKEIL (265 aa). Mn(2+) contacts are provided by aspartate 17, histidine 206, histidine 208, and asparagine 242. The tract at residues 396–506 is regulatory domain; it reads ELEYVAVTVC…YLNAVNKALL (111 aa).

It belongs to the alpha-IPM synthase/homocitrate synthase family. LeuA type 1 subfamily. As to quaternary structure, homodimer. Requires Mn(2+) as cofactor.

The protein localises to the cytoplasm. It catalyses the reaction 3-methyl-2-oxobutanoate + acetyl-CoA + H2O = (2S)-2-isopropylmalate + CoA + H(+). It functions in the pathway amino-acid biosynthesis; L-leucine biosynthesis; L-leucine from 3-methyl-2-oxobutanoate: step 1/4. In terms of biological role, catalyzes the condensation of the acetyl group of acetyl-CoA with 3-methyl-2-oxobutanoate (2-ketoisovalerate) to form 3-carboxy-3-hydroxy-4-methylpentanoate (2-isopropylmalate). This is 2-isopropylmalate synthase from Methylacidiphilum infernorum (isolate V4) (Methylokorus infernorum (strain V4)).